A 620-amino-acid polypeptide reads, in one-letter code: Glutathione-regulated potassium-efflux system protein KefC (620 aa).

Over Met1 to Ser3 the chain is Periplasmic. A helical membrane pass occupies residues His4–Val24. Arg25 is a topological domain (cytoplasmic). A helical transmembrane segment spans residues Leu26–Leu46. At Arg47 to Glu53 the chain is on the periplasmic side. Residues Ser54–Leu74 form a helical membrane-spanning segment. At Asp75–Gly89 the chain is on the cytoplasmic side. Residues Gly90–Leu110 traverse the membrane as a helical segment. Over Arg111–Gln113 the chain is Periplasmic. Residues Val114–Met134 traverse the membrane as a helical segment. The Cytoplasmic segment spans residues Asn135 to Ala148. A helical transmembrane segment spans residues Phe149–Leu169. Residues Ala170–Thr177 lie on the Periplasmic side of the membrane. Residues Met178 to Leu198 traverse the membrane as a helical segment. At Gly199–Ser213 the chain is on the cytoplasmic side. The helical transmembrane segment at Gly214–Leu233 threads the bilayer. Residues Leu234–Glu236 are Periplasmic-facing. A helical transmembrane segment spans residues Val237–Ser254. The Cytoplasmic segment spans residues Ser255–Lys269. The chain crosses the membrane as a helical span at residues Gly270–Ile290. Residues Glu291–Pro293 lie on the Periplasmic side of the membrane. The chain crosses the membrane as a helical span at residues Leu294–Ile314. Residues Ala315–Arg326 lie on the Cytoplasmic side of the membrane. Residues Trp327 to Gln347 form a helical membrane-spanning segment. Over Met348–Lys358 the chain is Periplasmic. The chain crosses the membrane as a helical span at residues Ser359–Asn379. Over Arg380–Ser620 the chain is Cytoplasmic. The RCK N-terminal domain occupies Gln399–Thr518. A disordered region spans residues Gly597 to Ser620.

It belongs to the monovalent cation:proton antiporter 2 (CPA2) transporter (TC 2.A.37) family. KefC subfamily. Homodimer. Interacts with the regulatory subunit KefF.

The protein localises to the cell inner membrane. In terms of biological role, pore-forming subunit of a potassium efflux system that confers protection against electrophiles. Catalyzes K(+)/H(+) antiport. This is Glutathione-regulated potassium-efflux system protein KefC from Shigella flexneri.